The chain runs to 271 residues: 4-hydroxy-tetrahydrodipicolinate reductase (271 aa).

10–15 (GAAGRM) contributes to the NAD(+) binding site. An NADP(+)-binding site is contributed by arginine 37. Residues 100 to 102 (GTT) and 124 to 127 (SGNM) each bind NAD(+). Histidine 157 functions as the Proton donor/acceptor in the catalytic mechanism. Histidine 158 serves as a coordination point for (S)-2,3,4,5-tetrahydrodipicolinate. Catalysis depends on lysine 161, which acts as the Proton donor. (S)-2,3,4,5-tetrahydrodipicolinate is bound at residue 167–168 (GT). Residues 183-202 (SLSEHEQRGRDGHTGPRKDG) form a disordered region. Residues 185–202 (SEHEQRGRDGHTGPRKDG) are compositionally biased toward basic and acidic residues.

The protein belongs to the DapB family.

The protein localises to the cytoplasm. It carries out the reaction (S)-2,3,4,5-tetrahydrodipicolinate + NAD(+) + H2O = (2S,4S)-4-hydroxy-2,3,4,5-tetrahydrodipicolinate + NADH + H(+). It catalyses the reaction (S)-2,3,4,5-tetrahydrodipicolinate + NADP(+) + H2O = (2S,4S)-4-hydroxy-2,3,4,5-tetrahydrodipicolinate + NADPH + H(+). The protein operates within amino-acid biosynthesis; L-lysine biosynthesis via DAP pathway; (S)-tetrahydrodipicolinate from L-aspartate: step 4/4. Its function is as follows. Catalyzes the conversion of 4-hydroxy-tetrahydrodipicolinate (HTPA) to tetrahydrodipicolinate. In Beijerinckia indica subsp. indica (strain ATCC 9039 / DSM 1715 / NCIMB 8712), this protein is 4-hydroxy-tetrahydrodipicolinate reductase.